We begin with the raw amino-acid sequence, 370 residues long: Doublesex- and mab-3-related transcription factor C2 (370 aa).

The segment at M1–R38 is disordered. Residues C42–R89 constitute a DNA-binding region (DM). The disordered stretch occupies residues A334–V356.

The protein belongs to the DMRT family. As to expression, expressed in testis. Highly expressed in ovary.

The protein resides in the nucleus. In terms of biological role, may be involved in sexual development. This chain is Doublesex- and mab-3-related transcription factor C2 (Dmrtc2), found in Mus musculus (Mouse).